The primary structure comprises 457 residues: F-box/LRR-repeat protein At3g62440 (457 aa).

The 49-residue stretch at 1–49 (MDRISNLPDEIICHIGSFLSAREAAFTTVLSKRWHNLFTIVPDLHFDSS) folds into the F-box domain. LRR repeat units follow at residues 53–79 (GESLTDFVDRVMALPASSRVNKLSLKW), 147–174 (LSLGSGFAIDFLPENALLPALKTLSLYH), 177–202 (FYEFGRCAFKTLLASSPVLEELTVCG), 229–254 (WDAFDDSDFKSISFDTPSLAYLYYSD), 283–310 (WGKGDEKRFNPINLLHGLKNVETLNLYT), and 337–362 (LSNFCWSSMPMLIKKAPNLKTLNIDG).

The chain is F-box/LRR-repeat protein At3g62440 from Arabidopsis thaliana (Mouse-ear cress).